The chain runs to 59 residues: UPF0391 membrane protein lpl2443 (59 aa).

Helical transmembrane passes span 5 to 25 (ALIF…GIAV) and 30 to 50 (IAKI…IMGL).

This sequence belongs to the UPF0391 family.

The protein localises to the cell membrane. In Legionella pneumophila (strain Lens), this protein is UPF0391 membrane protein lpl2443.